Reading from the N-terminus, the 617-residue chain is UvrABC system protein C (617 aa).

The GIY-YIG domain occupies 22–100 (KLPGVYRFFD…IKALSPKYNI (79 aa)). Residues 209–244 (DELTRTLQHKMQTAAANLQFEEAARYRDQIQALGIM) enclose the UVR domain.

The protein belongs to the UvrC family. As to quaternary structure, interacts with UvrB in an incision complex.

Its subcellular location is the cytoplasm. Its function is as follows. The UvrABC repair system catalyzes the recognition and processing of DNA lesions. UvrC both incises the 5' and 3' sides of the lesion. The N-terminal half is responsible for the 3' incision and the C-terminal half is responsible for the 5' incision. This is UvrABC system protein C from Neisseria meningitidis serogroup A / serotype 4A (strain DSM 15465 / Z2491).